The primary structure comprises 893 residues: Valine--tRNA ligase (893 aa).

A 'HIGH' region motif is present at residues 57 to 67; sequence PNVTGTLHMGH. A 'KMSKS' region motif is present at residues 545–549; sequence KMSKS. Residue Lys548 coordinates ATP. A coiled-coil region spans residues 821-855; it reads TSGSVDLEAERKRLEKDLAAAQKELATTEGKLGNE.

Belongs to the class-I aminoacyl-tRNA synthetase family. ValS type 1 subfamily. Monomer.

The protein localises to the cytoplasm. The enzyme catalyses tRNA(Val) + L-valine + ATP = L-valyl-tRNA(Val) + AMP + diphosphate. In terms of biological role, catalyzes the attachment of valine to tRNA(Val). As ValRS can inadvertently accommodate and process structurally similar amino acids such as threonine, to avoid such errors, it has a 'posttransfer' editing activity that hydrolyzes mischarged Thr-tRNA(Val) in a tRNA-dependent manner. The polypeptide is Valine--tRNA ligase (Nocardia farcinica (strain IFM 10152)).